The sequence spans 230 residues: Spliceosome-associated protein CWC15 homolog (230 aa).

Disordered stretches follow at residues methionine 1–glutamine 157 and alanine 164–phenylalanine 183. Polar residues predominate over residues lysine 25–aspartate 34. Coiled coils occupy residues glycine 47–serine 82 and aspartate 119–alanine 164. A compositionally biased stretch (basic and acidic residues) spans alanine 52–aspartate 78. A compositionally biased stretch (acidic residues) spans aspartate 104–threonine 125. The segment covering glutamate 131–glutamine 157 has biased composition (basic and acidic residues).

The protein belongs to the CWC15 family. As to quaternary structure, component of spliceosomal complex.

It is found in the nucleus. Functionally, component of a spliceosomal complex that is required for activating pre-mRNA splicing. This is Spliceosome-associated protein CWC15 homolog from Caenorhabditis elegans.